Here is a 184-residue protein sequence, read N- to C-terminus: UPF0179 protein Pcal_2106 (184 aa).

The span at 146–161 (GASSAGISQAPSRVPL) shows a compositional bias: low complexity. The disordered stretch occupies residues 146-184 (GASSAGISQAPSRVPLSKPPSKSPSPQKSSPRGPTSRLP).

The protein belongs to the UPF0179 family.

This chain is UPF0179 protein Pcal_2106, found in Pyrobaculum calidifontis (strain DSM 21063 / JCM 11548 / VA1).